A 217-amino-acid polypeptide reads, in one-letter code: Octanoyltransferase (217 aa).

The BPL/LPL catalytic domain occupies 32 to 207 (SDSPDELWIV…TLSQLLGYQQ (176 aa)). Substrate contacts are provided by residues 71-78 (RGGQVTYH), 138-140 (SLG), and 151-153 (GLA). The active-site Acyl-thioester intermediate is Cys-169.

It belongs to the LipB family.

The protein resides in the cytoplasm. It carries out the reaction octanoyl-[ACP] + L-lysyl-[protein] = N(6)-octanoyl-L-lysyl-[protein] + holo-[ACP] + H(+). Its pathway is protein modification; protein lipoylation via endogenous pathway; protein N(6)-(lipoyl)lysine from octanoyl-[acyl-carrier-protein]: step 1/2. In terms of biological role, catalyzes the transfer of endogenously produced octanoic acid from octanoyl-acyl-carrier-protein onto the lipoyl domains of lipoate-dependent enzymes. Lipoyl-ACP can also act as a substrate although octanoyl-ACP is likely to be the physiological substrate. This is Octanoyltransferase from Shewanella sp. (strain MR-7).